A 330-amino-acid chain; its full sequence is MQTLAQHLTSQAVNDSLSHLILTLADTSKAISHAVRHGALAGVLGATEQENVQGETQKKLDIITNDMLKDALKADGTVRGLASEEEDHVVEVSQNGQYLVCFDPLDGSSNIDINSLVGTIFSVLPAPAGELTETSFLQSGRAQLAAGYVLYGPSTMLALTTGQGVQLFTLHPETNEFLLTNAAMSISPDTQEFAINMSNQRFWEAPMQTYIADLLLGKIGPREKSFNMRWIAAMVGDVHRVLSRGGIFTYPTDNKDPKKPYKLRLMYEANPMAFLVEQAGGKASTGYETILDITPTHIHQRVAVILGSSNEVDACLSYHGIDYSEEPNIE.

The Mg(2+) site is built by Glu84, Asp103, Leu105, and Asp106. Substrate-binding positions include Asp106–Ser109, Asn196, and Lys262. Glu268 is a binding site for Mg(2+).

The protein belongs to the FBPase class 1 family. In terms of assembly, homotetramer. Requires Mg(2+) as cofactor.

Its subcellular location is the cytoplasm. It catalyses the reaction beta-D-fructose 1,6-bisphosphate + H2O = beta-D-fructose 6-phosphate + phosphate. The protein operates within carbohydrate biosynthesis; gluconeogenesis. This Shewanella baltica (strain OS185) protein is Fructose-1,6-bisphosphatase class 1.